Here is a 421-residue protein sequence, read N- to C-terminus: Testin (421 aa).

Residues 92–199 (MILTNPVAAK…GDVKLPREMD (108 aa)) enclose the PET domain. A disordered region spans residues 133–164 (EKQPVAGSEGAQYRKKQLAKQLPAHDQDPSKC). Basic and acidic residues predominate over residues 155-164 (PAHDQDPSKC). 3 LIM zinc-binding domains span residues 234 to 297 (YSCY…CDSE), 299 to 359 (PRCA…NHAV), and 362 to 421 (QGCH…KMMS).

This sequence belongs to the prickle / espinas / testin family. Interacts via LIM domain 1 with ZYX. Interacts (via LIM domain 3) with ENAH and VASP. Interacts with ALKBH4, talin, actin, alpha-actinin, GRIP1 and PXN. Interacts (via LIM domain 2) with ACTL7A (via N-terminus). Heterodimer with ACTL7A; the heterodimer interacts with ENAH to form a heterotrimer.

The protein localises to the cytoplasm. The protein resides in the cell junction. Its subcellular location is the focal adhesion. In terms of biological role, scaffold protein that may play a role in cell adhesion, cell spreading and in the reorganization of the actin cytoskeleton. Plays a role in the regulation of cell proliferation. May act as a tumor suppressor. The polypeptide is Testin (TES) (Neofelis nebulosa (Clouded leopard)).